A 377-amino-acid polypeptide reads, in one-letter code: Chaperone protein DnaJ 1 (377 aa).

The J domain maps to 4 to 68 (DYYQTLGVTR…EIRQRYDQFG (65 aa)). The CR-type zinc-finger motif lies at 136–218 (GGEKEIRIPH…CNGVGRKQET (83 aa)). Zn(2+) contacts are provided by Cys-149, Cys-152, Cys-166, Cys-169, Cys-192, Cys-195, Cys-206, and Cys-209. CXXCXGXG motif repeat units lie at residues 149-156 (CQVCEGTG), 166-173 (CGTCNGAG), 192-199 (CPTCNGSG), and 206-213 (CEACNGVG).

This sequence belongs to the DnaJ family. Homodimer. Zn(2+) is required as a cofactor.

It localises to the cytoplasm. Its function is as follows. Participates actively in the response to hyperosmotic and heat shock by preventing the aggregation of stress-denatured proteins and by disaggregating proteins, also in an autonomous, DnaK-independent fashion. Unfolded proteins bind initially to DnaJ; upon interaction with the DnaJ-bound protein, DnaK hydrolyzes its bound ATP, resulting in the formation of a stable complex. GrpE releases ADP from DnaK; ATP binding to DnaK triggers the release of the substrate protein, thus completing the reaction cycle. Several rounds of ATP-dependent interactions between DnaJ, DnaK and GrpE are required for fully efficient folding. Also involved, together with DnaK and GrpE, in the DNA replication of plasmids through activation of initiation proteins. This is Chaperone protein DnaJ 1 from Synechocystis sp. (strain ATCC 27184 / PCC 6803 / Kazusa).